Here is a 350-residue protein sequence, read N- to C-terminus: L-threonine 3-dehydrogenase (350 aa).

Cys-42 serves as a coordination point for Zn(2+). Catalysis depends on charge relay system residues Thr-44 and His-47. 6 residues coordinate Zn(2+): His-67, Glu-68, Cys-97, Cys-100, Cys-103, and Cys-111. Residues Leu-179, Glu-199, Arg-204, 266-268 (LGL), and 291-292 (IT) contribute to the NAD(+) site.

This sequence belongs to the zinc-containing alcohol dehydrogenase family. Homotetramer. It depends on Zn(2+) as a cofactor.

The protein localises to the cytoplasm. The catalysed reaction is L-threonine + NAD(+) = (2S)-2-amino-3-oxobutanoate + NADH + H(+). It participates in amino-acid degradation; L-threonine degradation via oxydo-reductase pathway; glycine from L-threonine: step 1/2. Its function is as follows. Catalyzes the NAD(+)-dependent oxidation of L-threonine to 2-amino-3-ketobutyrate. To a lesser extent, also catalyzes the oxidation of L-serine. The polypeptide is L-threonine 3-dehydrogenase (Thermococcus kodakarensis (strain ATCC BAA-918 / JCM 12380 / KOD1) (Pyrococcus kodakaraensis (strain KOD1))).